The chain runs to 306 residues: Putative S-adenosyl-L-methionine-dependent methyltransferase Mvan_1345 (306 aa).

Residues Asp-134 and 163 to 164 each bind S-adenosyl-L-methionine; that span reads DL.

It belongs to the UPF0677 family.

In terms of biological role, exhibits S-adenosyl-L-methionine-dependent methyltransferase activity. The polypeptide is Putative S-adenosyl-L-methionine-dependent methyltransferase Mvan_1345 (Mycolicibacterium vanbaalenii (strain DSM 7251 / JCM 13017 / BCRC 16820 / KCTC 9966 / NRRL B-24157 / PYR-1) (Mycobacterium vanbaalenii)).